A 230-amino-acid polypeptide reads, in one-letter code: 2,3-bisphosphoglycerate-dependent phosphoglycerate mutase (230 aa).

Substrate-binding positions include arginine 10 to asparagine 17, threonine 23 to glycine 24, arginine 62, glutamate 89 to tyrosine 92, lysine 100, arginine 116 to arginine 117, and glycine 185 to asparagine 186. Catalysis depends on histidine 11, which acts as the Tele-phosphohistidine intermediate. Glutamate 89 functions as the Proton donor/acceptor in the catalytic mechanism.

The protein belongs to the phosphoglycerate mutase family. BPG-dependent PGAM subfamily. Homodimer.

The catalysed reaction is (2R)-2-phosphoglycerate = (2R)-3-phosphoglycerate. It participates in carbohydrate degradation; glycolysis; pyruvate from D-glyceraldehyde 3-phosphate: step 3/5. Functionally, catalyzes the interconversion of 2-phosphoglycerate and 3-phosphoglycerate. This Buchnera aphidicola subsp. Schizaphis graminum (strain Sg) protein is 2,3-bisphosphoglycerate-dependent phosphoglycerate mutase.